A 245-amino-acid polypeptide reads, in one-letter code: Ribosomal RNA small subunit methyltransferase J (245 aa).

Residues 94-95 (RD), 110-111 (ER), and D164 each bind S-adenosyl-L-methionine.

Belongs to the methyltransferase superfamily. RsmJ family.

It is found in the cytoplasm. The catalysed reaction is guanosine(1516) in 16S rRNA + S-adenosyl-L-methionine = N(2)-methylguanosine(1516) in 16S rRNA + S-adenosyl-L-homocysteine + H(+). Its function is as follows. Specifically methylates the guanosine in position 1516 of 16S rRNA. This Dechloromonas aromatica (strain RCB) protein is Ribosomal RNA small subunit methyltransferase J.